A 201-amino-acid chain; its full sequence is Imidazoleglycerol-phosphate dehydratase (201 aa).

This sequence belongs to the imidazoleglycerol-phosphate dehydratase family.

The protein localises to the cytoplasm. The enzyme catalyses D-erythro-1-(imidazol-4-yl)glycerol 3-phosphate = 3-(imidazol-4-yl)-2-oxopropyl phosphate + H2O. The protein operates within amino-acid biosynthesis; L-histidine biosynthesis; L-histidine from 5-phospho-alpha-D-ribose 1-diphosphate: step 6/9. The chain is Imidazoleglycerol-phosphate dehydratase from Methanopyrus kandleri (strain AV19 / DSM 6324 / JCM 9639 / NBRC 100938).